Here is a 737-residue protein sequence, read N- to C-terminus: Polyribonucleotide nucleotidyltransferase (737 aa).

Mg(2+)-binding residues include Asp489 and Asp495. The region spanning 556-615 (PKIDTIKIDVDKIKIVIGKGGETIDKIIAETGVKIDIDEEGNVSIYSSDQDAINRAKEII) is the KH domain. The S1 motif domain maps to 625–693 (DEVYRAKVVR…EKGRIDASMK (69 aa)). Positions 691–737 (SMKALLPRPPKPEHDEKGEKSERPHRPRHQKDYKPKKEFTETSKDSE) are disordered. Over residues 700–737 (PKPEHDEKGEKSERPHRPRHQKDYKPKKEFTETSKDSE) the composition is skewed to basic and acidic residues.

Belongs to the polyribonucleotide nucleotidyltransferase family. Mg(2+) is required as a cofactor.

The protein resides in the cytoplasm. The enzyme catalyses RNA(n+1) + phosphate = RNA(n) + a ribonucleoside 5'-diphosphate. Involved in mRNA degradation. Catalyzes the phosphorolysis of single-stranded polyribonucleotides processively in the 3'- to 5'-direction. This chain is Polyribonucleotide nucleotidyltransferase, found in Streptococcus pneumoniae serotype 4 (strain ATCC BAA-334 / TIGR4).